Here is a 336-residue protein sequence, read N- to C-terminus: Ferredoxin--NADP reductase 1 (336 aa).

Glutamate 37, lysine 45, phenylalanine 50, valine 90, leucine 125, aspartate 287, and threonine 328 together coordinate FAD.

This sequence belongs to the ferredoxin--NADP reductase type 2 family. Homodimer. FAD serves as cofactor.

It carries out the reaction 2 reduced [2Fe-2S]-[ferredoxin] + NADP(+) + H(+) = 2 oxidized [2Fe-2S]-[ferredoxin] + NADPH. The polypeptide is Ferredoxin--NADP reductase 1 (Bacillus velezensis (strain DSM 23117 / BGSC 10A6 / LMG 26770 / FZB42) (Bacillus amyloliquefaciens subsp. plantarum)).